The primary structure comprises 755 residues: 1,4-alpha-glucan branching enzyme GlgB (755 aa).

The active-site Nucleophile is D435. The active-site Proton donor is the E488.

Belongs to the glycosyl hydrolase 13 family. GlgB subfamily. In terms of assembly, monomer.

It carries out the reaction Transfers a segment of a (1-&gt;4)-alpha-D-glucan chain to a primary hydroxy group in a similar glucan chain.. Its pathway is glycan biosynthesis; glycogen biosynthesis. In terms of biological role, catalyzes the formation of the alpha-1,6-glucosidic linkages in glycogen by scission of a 1,4-alpha-linked oligosaccharide from growing alpha-1,4-glucan chains and the subsequent attachment of the oligosaccharide to the alpha-1,6 position. In Vibrio parahaemolyticus serotype O3:K6 (strain RIMD 2210633), this protein is 1,4-alpha-glucan branching enzyme GlgB.